The primary structure comprises 169 residues: Cell division inhibitor SulA (169 aa).

Residues 1–16 (MFTSAHANRSPLTSAS) show a composition bias toward polar residues. The tract at residues 1 to 20 (MFTSAHANRSPLTSASVRRP) is disordered. The segment at 106 to 112 (ALRTGNY) is ftsZ binding. Residues 162–169 (KIHSNLYH) are lon protease binding.

This sequence belongs to the SulA family. In terms of assembly, interacts with FtsZ. Is rapidly cleaved and degraded by the Lon protease once DNA damage is repaired.

Its function is as follows. Component of the SOS system and an inhibitor of cell division. Accumulation of SulA causes rapid cessation of cell division and the appearance of long, non-septate filaments. In the presence of GTP, binds a polymerization-competent form of FtsZ in a 1:1 ratio, thus inhibiting FtsZ polymerization and therefore preventing it from participating in the assembly of the Z ring. This mechanism prevents the premature segregation of damaged DNA to daughter cells during cell division. The sequence is that of Cell division inhibitor SulA from Klebsiella aerogenes (Enterobacter aerogenes).